We begin with the raw amino-acid sequence, 71 residues long: Pro-MCH (71 aa).

The first 20 residues, 1–20, serve as a signal peptide directing secretion; the sequence is AKMNLSSYILILTFSLFSQG.

Belongs to the melanin-concentrating hormone family.

The protein localises to the secreted. In Pan paniscus (Pygmy chimpanzee), this protein is Pro-MCH (PMCH).